A 418-amino-acid chain; its full sequence is Magnesium transporter MRS2-E (418 aa).

The tract at residues 119-146 is disordered; it reads DAAPSTNPAAADRGNGTEQGDQGSVPGL. Residues 166–232 adopt a coiled-coil conformation; it reads VCLEHACKDL…RDELEHLLDD (67 aa). A compositionally biased stretch (basic and acidic residues) spans 258 to 268; it reads DSHKYASVDHD. The segment at 258–287 is disordered; sequence DSHKYASVDHDDDREEEDHDDETESGRESS. Over residues 269–280 the composition is skewed to acidic residues; it reads DDREEEDHDDET. The helical transmembrane segment at 344–364 threads the bilayer; it reads GVMLTTATVVVTAGIVVVSLF. The Required for magnesium transport activity motif lies at 365–367; sequence GMN. A helical membrane pass occupies residues 389 to 409; it reads FWETTFGTVAGCIAIYLLAIY.

This sequence belongs to the CorA metal ion transporter (MIT) (TC 1.A.35.5) family.

The protein resides in the membrane. Functionally, magnesium transporter that may mediate the influx of magnesium. The polypeptide is Magnesium transporter MRS2-E (MRS2-E) (Oryza sativa subsp. indica (Rice)).